The sequence spans 179 residues: Hypoxanthine phosphoribosyltransferase (179 aa).

Diphosphate is bound by residues R45 and G46. Residue E101 participates in GMP binding. E101 contributes to the IMP binding site. The Mg(2+) site is built by E101 and D102. Catalysis depends on D105, which acts as the Proton acceptor. Residues D105–L110, K133, and D161 each bind GMP. IMP-binding positions include D105–L110 and K133. R167 provides a ligand contact to diphosphate.

Belongs to the purine/pyrimidine phosphoribosyltransferase family. As to quaternary structure, homotetramer. It depends on Mg(2+) as a cofactor.

It is found in the cytoplasm. The enzyme catalyses IMP + diphosphate = hypoxanthine + 5-phospho-alpha-D-ribose 1-diphosphate. The catalysed reaction is GMP + diphosphate = guanine + 5-phospho-alpha-D-ribose 1-diphosphate. It participates in purine metabolism; IMP biosynthesis via salvage pathway; IMP from hypoxanthine: step 1/1. Purine salvage pathway enzyme which catalyzes the transfer of the ribosyl-5-phosphate group from 5-phospho-alpha-D-ribose 1-diphosphate (PRPP) to the N9 position of hypoxanthine to yield IMP (inosine 5'-monophosphate). To a lesser extent, can also act on guanine leading to GMP, but shows a highly less efficient activity with xanthine. The chain is Hypoxanthine phosphoribosyltransferase (hpt) from Haemophilus influenzae (strain ATCC 51907 / DSM 11121 / KW20 / Rd).